We begin with the raw amino-acid sequence, 51 residues long: Insulin (51 aa).

Intrachain disulfides connect Cys-7-Cys-37, Cys-19-Cys-50, and Cys-36-Cys-41.

Belongs to the insulin family. In terms of assembly, heterodimer of a B chain and an A chain linked by two disulfide bonds.

The protein resides in the secreted. Functionally, insulin decreases blood glucose concentration. It increases cell permeability to monosaccharides, amino acids and fatty acids. It accelerates glycolysis, the pentose phosphate cycle, and glycogen synthesis in liver. The protein is Insulin (INS) of Didelphis virginiana (North American opossum).